Reading from the N-terminus, the 622-residue chain is DNA mismatch repair protein MutL (622 aa).

It belongs to the DNA mismatch repair MutL/HexB family.

This protein is involved in the repair of mismatches in DNA. It is required for dam-dependent methyl-directed DNA mismatch repair. May act as a 'molecular matchmaker', a protein that promotes the formation of a stable complex between two or more DNA-binding proteins in an ATP-dependent manner without itself being part of a final effector complex. The chain is DNA mismatch repair protein MutL from Prosthecochloris aestuarii (strain DSM 271 / SK 413).